Consider the following 190-residue polypeptide: MIRNFVISLRSTALLWILTALIYPAIVLVIGQLVFPYQANGSLITDSQGQVVGSALIGQTFTEEGYFWSRPSAINYSEGADASPTGISGASNLAPSNPDLLSRIEAEAQRLEDNAVQPTADLLYSSGSGLDPHISPAAAQAQFDRVAKARSIPPQELQSLITKHTEGRFLGIFGEPGVNVLTLNLALDNR.

Residues 15-35 (LWILTALIYPAIVLVIGQLVF) traverse the membrane as a helical segment.

It belongs to the KdpC family. In terms of assembly, the system is composed of three essential subunits: KdpA, KdpB and KdpC.

It is found in the cell inner membrane. In terms of biological role, part of the high-affinity ATP-driven potassium transport (or Kdp) system, which catalyzes the hydrolysis of ATP coupled with the electrogenic transport of potassium into the cytoplasm. This subunit acts as a catalytic chaperone that increases the ATP-binding affinity of the ATP-hydrolyzing subunit KdpB by the formation of a transient KdpB/KdpC/ATP ternary complex. The polypeptide is Potassium-transporting ATPase KdpC subunit (Synechocystis sp. (strain ATCC 27184 / PCC 6803 / Kazusa)).